The primary structure comprises 223 residues: Triosephosphate isomerase (223 aa).

A substrate-binding site is contributed by 10–12 (NFK). His-94 functions as the Electrophile in the catalytic mechanism. Residue Glu-142 is the Proton acceptor of the active site. Substrate is bound by residues Ile-147, Gly-182, and 203–204 (AS).

It belongs to the triosephosphate isomerase family. Homotetramer; dimer of dimers.

The protein resides in the cytoplasm. The enzyme catalyses D-glyceraldehyde 3-phosphate = dihydroxyacetone phosphate. It functions in the pathway carbohydrate biosynthesis; gluconeogenesis. It participates in carbohydrate degradation; glycolysis; D-glyceraldehyde 3-phosphate from glycerone phosphate: step 1/1. In terms of biological role, involved in the gluconeogenesis. Catalyzes stereospecifically the conversion of dihydroxyacetone phosphate (DHAP) to D-glyceraldehyde-3-phosphate (G3P). This Archaeoglobus fulgidus (strain ATCC 49558 / DSM 4304 / JCM 9628 / NBRC 100126 / VC-16) protein is Triosephosphate isomerase.